Consider the following 182-residue polypeptide: MDSCIQVFSVIANFDTDYNLSISFNTDFLEANVINILLLLLGLMYVLKEFLGSILVDRQEKVLLAIQESEERLKQANSRLSESEKQLAQTQMVIAQIIKEAETTAQKVRQSILDQGKADVDKLISASKASIATAEVQIKQQIQLQVTSLAIKRVTMQLQDQITPNIQTRIIDNNIAQLGGYL.

The helical transmembrane segment at 36–56 (ILLLLLGLMYVLKEFLGSILV) threads the bilayer.

It belongs to the ATPase B chain family. As to quaternary structure, F-type ATPases have 2 components, F(1) - the catalytic core - and F(0) - the membrane proton channel. F(1) has five subunits: alpha(3), beta(3), gamma(1), delta(1), epsilon(1). F(0) has four main subunits: a(1), b(1), b'(1) and c(10-14). The alpha and beta chains form an alternating ring which encloses part of the gamma chain. F(1) is attached to F(0) by a central stalk formed by the gamma and epsilon chains, while a peripheral stalk is formed by the delta, b and b' chains.

It is found in the plastid. Its subcellular location is the chloroplast thylakoid membrane. F(1)F(0) ATP synthase produces ATP from ADP in the presence of a proton or sodium gradient. F-type ATPases consist of two structural domains, F(1) containing the extramembraneous catalytic core and F(0) containing the membrane proton channel, linked together by a central stalk and a peripheral stalk. During catalysis, ATP synthesis in the catalytic domain of F(1) is coupled via a rotary mechanism of the central stalk subunits to proton translocation. Its function is as follows. Component of the F(0) channel, it forms part of the peripheral stalk, linking F(1) to F(0). This Gracilaria tenuistipitata var. liui (Red alga) protein is ATP synthase subunit b, chloroplastic.